Reading from the N-terminus, the 242-residue chain is Proteasome subunit alpha (242 aa).

Belongs to the peptidase T1A family. As to quaternary structure, the 20S proteasome core is composed of 14 alpha and 14 beta subunits that assemble into four stacked heptameric rings, resulting in a barrel-shaped structure. The two inner rings, each composed of seven catalytic beta subunits, are sandwiched by two outer rings, each composed of seven alpha subunits. The catalytic chamber with the active sites is on the inside of the barrel. Has a gated structure, the ends of the cylinder being occluded by the N-termini of the alpha-subunits. Is capped at one or both ends by the proteasome regulatory ATPase, PAN.

Its subcellular location is the cytoplasm. The formation of the proteasomal ATPase PAN-20S proteasome complex, via the docking of the C-termini of PAN into the intersubunit pockets in the alpha-rings, triggers opening of the gate for substrate entry. Interconversion between the open-gate and close-gate conformations leads to a dynamic regulation of the 20S proteasome proteolysis activity. In terms of biological role, component of the proteasome core, a large protease complex with broad specificity involved in protein degradation. The protein is Proteasome subunit alpha of Sulfolobus acidocaldarius (strain ATCC 33909 / DSM 639 / JCM 8929 / NBRC 15157 / NCIMB 11770).